We begin with the raw amino-acid sequence, 397 residues long: Phosphoglycerate kinase (397 aa).

Substrate is bound by residues 21 to 23, R36, 59 to 62, R118, and R151; these read DFN and HLGR. ATP-binding positions include K202, G293, E324, and 353–356; that span reads GGDS.

The protein belongs to the phosphoglycerate kinase family. In terms of assembly, monomer.

It is found in the cytoplasm. The catalysed reaction is (2R)-3-phosphoglycerate + ATP = (2R)-3-phospho-glyceroyl phosphate + ADP. It functions in the pathway carbohydrate degradation; glycolysis; pyruvate from D-glyceraldehyde 3-phosphate: step 2/5. This Chloroherpeton thalassium (strain ATCC 35110 / GB-78) protein is Phosphoglycerate kinase.